The following is a 771-amino-acid chain: Probable exo-1,4-beta-xylosidase bxlB (771 aa).

A signal peptide spans 1 to 25; it reads MAHITSWHYGNAIALLVSLAPGALS. N-linked (GlcNAc...) asparagine glycosylation is present at N67. The active site involves D293. N305, N345, N423, and N464 each carry an N-linked (GlcNAc...) asparagine glycan.

Belongs to the glycosyl hydrolase 3 family.

It is found in the secreted. It carries out the reaction Hydrolysis of (1-&gt;4)-beta-D-xylans, to remove successive D-xylose residues from the non-reducing termini.. It participates in glycan degradation; xylan degradation. Functionally, xylan 1,4-beta-xylosidase involved in the hydrolysis of xylan, a major structural heterogeneous polysaccharide found in plant biomass representing the second most abundant polysaccharide in the biosphere, after cellulose. In Aspergillus fumigatus (strain CBS 144.89 / FGSC A1163 / CEA10) (Neosartorya fumigata), this protein is Probable exo-1,4-beta-xylosidase bxlB (bxlB).